A 229-amino-acid polypeptide reads, in one-letter code: MSELTNTEKRAVILLSGGLDSATVVAMARAEGYACYTMSFDYGQRHRAELDAAARVARDLGAVEHKVIGLNLNGIGGSALTDSSIAVPESPSEGIPITYVPARNTVFLSLALGWAEVLGARDIFIGVNAVDYSGYPDCRPEFVESFERMANLATKAGVEGQGFTIRAPLQNLSKSDIVKAGAALGVDYSLTVSCYQADDQGRACGKCDSCRLRTEGFTAAGMADPTRYF.

15-25 (LSGGLDSATVV) contributes to the ATP binding site. C194, C204, C207, and C210 together coordinate Zn(2+).

The protein belongs to the QueC family. Zn(2+) serves as cofactor.

It catalyses the reaction 7-carboxy-7-deazaguanine + NH4(+) + ATP = 7-cyano-7-deazaguanine + ADP + phosphate + H2O + H(+). It functions in the pathway purine metabolism; 7-cyano-7-deazaguanine biosynthesis. Functionally, catalyzes the ATP-dependent conversion of 7-carboxy-7-deazaguanine (CDG) to 7-cyano-7-deazaguanine (preQ(0)). The chain is 7-cyano-7-deazaguanine synthase from Pseudomonas savastanoi pv. phaseolicola (strain 1448A / Race 6) (Pseudomonas syringae pv. phaseolicola (strain 1448A / Race 6)).